Here is a 271-residue protein sequence, read N- to C-terminus: MFNVKGALNRLRTTWSNSEESDRDPRHLKSSDDLSNYTGSRMSYEETLPPVTLLGYSPKTKNRLLHPEMCDELRPLMPTRIQLYTEWTLLYSLEQHGASLHSLYDKLREDASTPRRVGYVLVIKDRKDGIFGAYSNEPFHPHEHMRYSGNGECFLWKMESVPNKILRAKIREDKDEDLIDVNDDEDKINNSGTVNESWKLCAYPYTGANDFMIYCTSKFLSLGAGEGHYGLWCDDGLMKGVTNPTQTYGNDVLSREGRKFTIMGLEVWRVG.

The interval 15 to 41 is disordered; the sequence is WSNSEESDRDPRHLKSSDDLSNYTGSR. Residues 23 to 32 are compositionally biased toward basic and acidic residues; it reads RDPRHLKSSD. Residues 63–271 form the TLDc domain; it reads RLLHPEMCDE…IMGLEVWRVG (209 aa).

It belongs to the OXR1 family.

The protein localises to the mitochondrion. In terms of biological role, may be involved in protection from oxidative damage. The chain is Oxidation resistance protein 1 (OXR1) from Candida glabrata (strain ATCC 2001 / BCRC 20586 / JCM 3761 / NBRC 0622 / NRRL Y-65 / CBS 138) (Yeast).